Consider the following 154-residue polypeptide: Ribosome maturation factor RimP (154 aa).

Belongs to the RimP family.

The protein resides in the cytoplasm. Functionally, required for maturation of 30S ribosomal subunits. The sequence is that of Ribosome maturation factor RimP from Hydrogenobaculum sp. (strain Y04AAS1).